A 474-amino-acid polypeptide reads, in one-letter code: Membrane-bound acylglycerophosphatidylinositol O-acyltransferase mboat7 (474 aa).

The Cytoplasmic segment spans residues 1 to 5 (MSPNE). A helical membrane pass occupies residues 6 to 22 (LTYLAILLGSAPLGFLF). Residues 23-33 (KNGSPQVKQRG) lie on the Lumenal side of the membrane. The helical transmembrane segment at 34–57 (SAAVGVALTLITCHIHSLHSAITI) threads the bilayer. The Cytoplasmic portion of the chain corresponds to 58–73 (LGTWLIIKILPRSCHF). Residues 74-93 (PTLGWTFTYLLFFRTITYFD) traverse the membrane as a helical segment. Residues 94-193 (IPAPTPFTNA…IPSWKPLVSR (100 aa)) lie on the Lumenal side of the membrane. A helical transmembrane segment spans residues 194 to 211 (LKPAPVFGVLFLIASQYF). Residues 212-230 (PLDYVKTDEFYEQAFLYRL) are Cytoplasmic-facing. Residues 231-260 (FYMVPTFFIFRMRFYVAWIFAECGCISAAF) traverse the membrane as a helical segment. Over 261–427 (GAYPVSAKSR…LTFTDTYRYW (167 aa)) the chain is Lumenal. N-linked (GlcNAc...) asparagine glycosylation is present at Asn322. Residues 428–448 (QSIYFSVHVLAISLFLLGRVL) form a helical membrane-spanning segment. Over 449 to 473 (ALKSPRRPRNTKEEKAEAKQENRLQ) the chain is Cytoplasmic.

This sequence belongs to the membrane-bound acyltransferase family.

Its subcellular location is the endoplasmic reticulum membrane. It carries out the reaction a 1-acyl-sn-glycero-3-phospho-(1D-myo-inositol) + (5Z,8Z,11Z,14Z)-eicosatetraenoyl-CoA = a 1-acyl-2-(5Z,8Z,11Z,14Z-eicosatetraenoyl)-sn-glycero-3-phospho-(1D-myo-inositol) + CoA. The enzyme catalyses (5Z,8Z,11Z,14Z)-eicosatetraenoyl-CoA + 1-hexadecanoyl-sn-glycero-3-phosphocholine = 1-hexadecanoyl-2-(5Z,8Z,11Z,14Z-eicosatetraenoyl)-sn-glycero-3-phosphocholine + CoA. The catalysed reaction is a 1-acyl-sn-glycero-3-phospho-(1D-myo-inositol) + an acyl-CoA = a 1,2-diacyl-sn-glycero-3-phospho-(1D-myo-inositol) + CoA. It catalyses the reaction 1-octadecanoyl-sn-glycero-3-phospho-(1D-myo-inositol) + (5Z,8Z,11Z,14Z)-eicosatetraenoyl-CoA = 1-octadecanoyl-2-(5Z,8Z,11Z,14Z-eicosatetraenoyl)-sn-glycero-3-phospho-(1D-myo-inositol) + CoA. Its pathway is lipid metabolism; phospholipid metabolism. Its function is as follows. Acyltransferase which catalyzes the transfer of an acyl group from an acyl-CoA to a lysophosphatidylinositol (1-acylglycerophosphatidylinositol or LPI) leading to the production of a phosphatidylinositol (1,2-diacyl-sn-glycero-3-phosphoinositol or PI) and participates in the reacylation step of the phospholipid remodeling pathway also known as the Lands cycle. Prefers arachidonoyl-CoA as the acyl donor, thus contributing to the regulation of free levels arachidonic acid in cell. This chain is Membrane-bound acylglycerophosphatidylinositol O-acyltransferase mboat7 (mboat7), found in Xenopus laevis (African clawed frog).